Reading from the N-terminus, the 217-residue chain is Large ribosomal subunit protein uL4 (217 aa).

Positions 58-90 (TAATKGRSDVSGGGKKPWRQKGTGRARSGTSRS) are disordered.

Belongs to the universal ribosomal protein uL4 family. In terms of assembly, part of the 50S ribosomal subunit.

Its function is as follows. One of the primary rRNA binding proteins, this protein initially binds near the 5'-end of the 23S rRNA. It is important during the early stages of 50S assembly. It makes multiple contacts with different domains of the 23S rRNA in the assembled 50S subunit and ribosome. In terms of biological role, forms part of the polypeptide exit tunnel. This Syntrophus aciditrophicus (strain SB) protein is Large ribosomal subunit protein uL4.